An 845-amino-acid polypeptide reads, in one-letter code: uncharacterized protein (845 aa).

The span at 224 to 241 (SNNIPTGIQDSSKYTVNG) shows a compositional bias: polar residues. Disordered regions lie at residues 224 to 244 (SNNI…GPTE), 324 to 346 (QGTE…ANNG), 383 to 434 (RTAN…EGSA), 456 to 485 (VKAS…ATLN), 519 to 619 (NMTL…PKNS), 674 to 701 (VVSR…DSSP), and 739 to 785 (RKST…ANKS). Positions 390 to 399 (PTKKSNRSEQ) are enriched in basic and acidic residues. Over residues 400–422 (SKTVANTNVGSKNGTTPRSFAQK) the composition is skewed to polar residues. The segment covering 534–546 (NSWRSKYLSEGKN) has biased composition (basic and acidic residues). Positions 563-576 (SSLASPTKSSASPL) are enriched in low complexity. S567 is modified (phosphoserine). Composition is skewed to basic and acidic residues over residues 579-588 (APKETPERLC) and 600-614 (ANLK…KSDI). 3 stretches are compositionally biased toward polar residues: residues 674–683 (VVSRTVTSPK), 691–701 (SKASYNQDSSP), and 743–760 (ADSL…TPKA).

Its subcellular location is the mitochondrion. This is an uncharacterized protein from Schizosaccharomyces pombe (strain 972 / ATCC 24843) (Fission yeast).